We begin with the raw amino-acid sequence, 316 residues long: Bifunctional protein FolD (316 aa).

NADP(+)-binding positions include Gly165–Ser167 and Ile231.

Belongs to the tetrahydrofolate dehydrogenase/cyclohydrolase family. Homodimer.

It carries out the reaction (6R)-5,10-methylene-5,6,7,8-tetrahydrofolate + NADP(+) = (6R)-5,10-methenyltetrahydrofolate + NADPH. It catalyses the reaction (6R)-5,10-methenyltetrahydrofolate + H2O = (6R)-10-formyltetrahydrofolate + H(+). It participates in one-carbon metabolism; tetrahydrofolate interconversion. Catalyzes the oxidation of 5,10-methylenetetrahydrofolate to 5,10-methenyltetrahydrofolate and then the hydrolysis of 5,10-methenyltetrahydrofolate to 10-formyltetrahydrofolate. This chain is Bifunctional protein FolD, found in Sphingobium chlorophenolicum.